Consider the following 155-residue polypeptide: Small ribosomal subunit protein uS7 (155 aa).

Belongs to the universal ribosomal protein uS7 family. Part of the 30S ribosomal subunit. Contacts proteins S9 and S11.

Its function is as follows. One of the primary rRNA binding proteins, it binds directly to 16S rRNA where it nucleates assembly of the head domain of the 30S subunit. Is located at the subunit interface close to the decoding center, probably blocks exit of the E-site tRNA. This is Small ribosomal subunit protein uS7 from Chlorobium limicola (strain DSM 245 / NBRC 103803 / 6330).